The following is a 443-amino-acid chain: Deoxyguanosinetriphosphate triphosphohydrolase-like protein (443 aa).

An HD domain is found at 66 to 259 (RLTHSLEAAQ…MELADDIAYG (194 aa)).

Belongs to the dGTPase family. Type 2 subfamily.

The sequence is that of Deoxyguanosinetriphosphate triphosphohydrolase-like protein from Vibrio vulnificus (strain CMCP6).